A 106-amino-acid polypeptide reads, in one-letter code: Cytochrome c3 (106 aa).

Residues His26, His29, Cys34, Cys37, His38, His39, Cys50, Cys55, His56, His75, Cys82, Cys85, His86, Cys98, Cys101, and His102 each contribute to the heme c site.

In terms of processing, binds 4 heme c groups per subunit.

In terms of biological role, participates in sulfate respiration coupled with phosphorylation by transferring electrons from the enzyme dehydrogenase to ferredoxin. The protein is Cytochrome c3 of Maridesulfovibrio salexigens (Desulfovibrio salexigens).